The primary structure comprises 447 residues: Phospholipase A(1) DAD1, chloroplastic (447 aa).

The N-terminal 46 residues, 1-46, are a transit peptide targeting the chloroplast; it reads MRFSLSPVRPHSVVVPSLPKQDVVSYISGTTSNRQCRCVLTLPSPS. Positions 293-297 match the GXSXG motif; the sequence is GHSLG. Ser295 serves as the catalytic Acyl-ester intermediate. Residues Asp352 and His418 each act as charge relay system in the active site.

The protein belongs to the AB hydrolase superfamily. Lipase family. Expressed in flower buds, but not in leaves or roots. Restricted to the stamen filaments immediately before flower opening.

Its subcellular location is the plastid. The protein resides in the chloroplast. The enzyme catalyses a 1,2-diacyl-sn-glycero-3-phosphocholine + H2O = a 2-acyl-sn-glycero-3-phosphocholine + a fatty acid + H(+). It carries out the reaction 1-hexadecanoyl-2-(9Z,12Z-octadecadienoyl)-sn-glycero-3-phosphocholine + H2O = 2-(9Z,12Z-octadecadienoyl)-sn-glycero-3-phosphocholine + hexadecanoate + H(+). In terms of biological role, sn-1-specific phospholipase that releases free fatty acids from phospholipids. Low activity on galactolipids and triacylglycerols. Catalyzes the initial step of jasmonic acid biosynthesis. Not essential for jasmonate biosynthesis after wounding or upon pathogen infection. The polypeptide is Phospholipase A(1) DAD1, chloroplastic (Arabidopsis thaliana (Mouse-ear cress)).